A 149-amino-acid polypeptide reads, in one-letter code: Transcriptional repressor NrdR (149 aa).

The segment at 3–34 (CPFCSTEETKVIDSRLVSDGYQVRRRRECTKC) is a zinc-finger region. The region spanning 49–139 (PKIIKNNGMR…VYLSFENINE (91 aa)) is the ATP-cone domain.

Belongs to the NrdR family. Zn(2+) is required as a cofactor.

In terms of biological role, negatively regulates transcription of bacterial ribonucleotide reductase nrd genes and operons by binding to NrdR-boxes. The polypeptide is Transcriptional repressor NrdR (Mannheimia succiniciproducens (strain KCTC 0769BP / MBEL55E)).